We begin with the raw amino-acid sequence, 198 residues long: Glycerol-3-phosphate acyltransferase (198 aa).

The next 5 membrane-spanning stretches (helical) occupy residues 2 to 22 (FITYLLLIVAYLLGSIPFALV), 53 to 75 (AGFIVTIADILKGTLATGLPLIF), 79 to 98 (IHPLLFGLAAVLGHVYPIFA), 113 to 133 (LLCYAPIIFAILAVVFFTLLF), and 147 to 167 (IAAVIASIVNGDKIFIVAMCL).

The protein belongs to the PlsY family. In terms of assembly, probably interacts with PlsX.

The protein resides in the cell membrane. The enzyme catalyses an acyl phosphate + sn-glycerol 3-phosphate = a 1-acyl-sn-glycero-3-phosphate + phosphate. It participates in lipid metabolism; phospholipid metabolism. In terms of biological role, catalyzes the transfer of an acyl group from acyl-phosphate (acyl-PO(4)) to glycerol-3-phosphate (G3P) to form lysophosphatidic acid (LPA). This enzyme utilizes acyl-phosphate as fatty acyl donor, but not acyl-CoA or acyl-ACP. The protein is Glycerol-3-phosphate acyltransferase of Bacillus cytotoxicus (strain DSM 22905 / CIP 110041 / 391-98 / NVH 391-98).